Here is a 397-residue protein sequence, read N- to C-terminus: Tryptophan synthase beta chain (397 aa).

At Lys87 the chain carries N6-(pyridoxal phosphate)lysine.

The protein belongs to the TrpB family. Tetramer of two alpha and two beta chains. Pyridoxal 5'-phosphate serves as cofactor.

It carries out the reaction (1S,2R)-1-C-(indol-3-yl)glycerol 3-phosphate + L-serine = D-glyceraldehyde 3-phosphate + L-tryptophan + H2O. Its pathway is amino-acid biosynthesis; L-tryptophan biosynthesis; L-tryptophan from chorismate: step 5/5. The beta subunit is responsible for the synthesis of L-tryptophan from indole and L-serine. This Shigella boydii serotype 18 (strain CDC 3083-94 / BS512) protein is Tryptophan synthase beta chain.